The following is a 145-amino-acid chain: D-aminoacyl-tRNA deacylase (145 aa).

A Gly-cisPro motif, important for rejection of L-amino acids motif is present at residues 137–138 (GP).

This sequence belongs to the DTD family. Homodimer.

It localises to the cytoplasm. It catalyses the reaction glycyl-tRNA(Ala) + H2O = tRNA(Ala) + glycine + H(+). The enzyme catalyses a D-aminoacyl-tRNA + H2O = a tRNA + a D-alpha-amino acid + H(+). An aminoacyl-tRNA editing enzyme that deacylates mischarged D-aminoacyl-tRNAs. Also deacylates mischarged glycyl-tRNA(Ala), protecting cells against glycine mischarging by AlaRS. Acts via tRNA-based rather than protein-based catalysis; rejects L-amino acids rather than detecting D-amino acids in the active site. By recycling D-aminoacyl-tRNA to D-amino acids and free tRNA molecules, this enzyme counteracts the toxicity associated with the formation of D-aminoacyl-tRNA entities in vivo and helps enforce protein L-homochirality. This is D-aminoacyl-tRNA deacylase from Photobacterium profundum (strain SS9).